A 38-amino-acid polypeptide reads, in one-letter code: Potassium channel toxin alpha-KTx 2.3 (38 aa).

Cystine bridges form between Cys-7–Cys-29, Cys-13–Cys-34, and Cys-17–Cys-36.

Belongs to the short scorpion toxin superfamily. Potassium channel inhibitor family. Alpha-KTx 02 subfamily. Expressed by the venom gland.

The protein localises to the secreted. Functionally, inhibitor of voltage-gated potassium channels (Kv). It is capable of displacing the binding of radio-labeled noxiustoxin (AC P08815) to rat brain synaptosomes with high affinity (about 100 pM). It is also capable of inhibiting transient potassium-currents (resembling I(A)-type currents), in cultured rat cerebellar granule cells. About 50% of the peak currents are reduced by application of a 1.5 uM solution of this toxin. The sequence is that of Potassium channel toxin alpha-KTx 2.3 from Centruroides limpidus (Mexican scorpion).